We begin with the raw amino-acid sequence, 335 residues long: uncharacterized protein (335 aa).

Disordered stretches follow at residues 152–179 (IQLPDRMPKTTNGTLADPNMPPKTTVND) and 252–271 (LDLFGSPSSENKSTAGSASL). Residues Ser257 and Ser260 each carry the phosphoserine modification. Residues 257–271 (SPSSENKSTAGSASL) show a composition bias toward polar residues.

This is an uncharacterized protein from Schizosaccharomyces pombe (strain 972 / ATCC 24843) (Fission yeast).